A 216-amino-acid chain; its full sequence is Small ribosomal subunit protein uS3c (216 aa).

In terms of domain architecture, KH type-2 spans 43–118; that stretch reads IKNYLQKNMR…KLNIAITRIT (76 aa).

Belongs to the universal ribosomal protein uS3 family. As to quaternary structure, part of the 30S ribosomal subunit.

The protein resides in the plastid. It is found in the chloroplast. The chain is Small ribosomal subunit protein uS3c (rps3) from Eucalyptus globulus subsp. globulus (Tasmanian blue gum).